We begin with the raw amino-acid sequence, 69 residues long: DNA-directed RNA polymerase subunit epsilon (69 aa).

Belongs to the RNA polymerase subunit epsilon family. As to quaternary structure, RNAP is composed of a core of 2 alpha, a beta and a beta' subunit. The core is associated with a delta subunit, and at least one of epsilon or omega. When a sigma factor is associated with the core the holoenzyme is formed, which can initiate transcription.

It catalyses the reaction RNA(n) + a ribonucleoside 5'-triphosphate = RNA(n+1) + diphosphate. A non-essential component of RNA polymerase (RNAP). In Halalkalibacterium halodurans (strain ATCC BAA-125 / DSM 18197 / FERM 7344 / JCM 9153 / C-125) (Bacillus halodurans), this protein is DNA-directed RNA polymerase subunit epsilon.